Consider the following 496-residue polypeptide: Glutamyl-tRNA(Gln) amidotransferase subunit A (496 aa).

Catalysis depends on charge relay system residues Lys-75 and Ser-150. Ser-174 acts as the Acyl-ester intermediate in catalysis.

The protein belongs to the amidase family. GatA subfamily. In terms of assembly, heterotrimer of A, B and C subunits.

It carries out the reaction L-glutamyl-tRNA(Gln) + L-glutamine + ATP + H2O = L-glutaminyl-tRNA(Gln) + L-glutamate + ADP + phosphate + H(+). In terms of biological role, allows the formation of correctly charged Gln-tRNA(Gln) through the transamidation of misacylated Glu-tRNA(Gln) in organisms which lack glutaminyl-tRNA synthetase. The reaction takes place in the presence of glutamine and ATP through an activated gamma-phospho-Glu-tRNA(Gln). This is Glutamyl-tRNA(Gln) amidotransferase subunit A from Burkholderia lata (strain ATCC 17760 / DSM 23089 / LMG 22485 / NCIMB 9086 / R18194 / 383).